Reading from the N-terminus, the 115-residue chain is Phosphoribosyl-AMP cyclohydrolase (115 aa).

Residue aspartate 80 participates in Mg(2+) binding. Cysteine 81 contacts Zn(2+). Residues aspartate 82 and aspartate 84 each contribute to the Mg(2+) site. The Zn(2+) site is built by cysteine 97 and cysteine 104.

This sequence belongs to the PRA-CH family. Homodimer. It depends on Mg(2+) as a cofactor. Requires Zn(2+) as cofactor.

It localises to the cytoplasm. The enzyme catalyses 1-(5-phospho-beta-D-ribosyl)-5'-AMP + H2O = 1-(5-phospho-beta-D-ribosyl)-5-[(5-phospho-beta-D-ribosylamino)methylideneamino]imidazole-4-carboxamide. It functions in the pathway amino-acid biosynthesis; L-histidine biosynthesis; L-histidine from 5-phospho-alpha-D-ribose 1-diphosphate: step 3/9. Its function is as follows. Catalyzes the hydrolysis of the adenine ring of phosphoribosyl-AMP. This Mycobacterium leprae (strain Br4923) protein is Phosphoribosyl-AMP cyclohydrolase.